Reading from the N-terminus, the 265-residue chain is Lysosomal membrane ascorbate-dependent ferrireductase CYB561A3 (265 aa).

Over 1–2 (MA) the chain is Cytoplasmic. A helical membrane pass occupies residues 3–23 (VGWFYLSVLALCSLGSMCILF). In terms of domain architecture, Cytochrome b561 spans 12 to 219 (ALCSLGSMCI…FGLLVLYILL (208 aa)). At 24–45 (TIYWMRYWHGGFAWDGSMLMFN) the chain is on the lumenal side. Residues 46-66 (WHPVLMVTGMVVLYSAASLVY) form a helical membrane-spanning segment. Heme b contacts are provided by His47 and Arg67. Residues 67 to 83 (RLPQSWVGPRLPWKSGH) are Cytoplasmic-facing. L-ascorbate contacts are provided by Arg76 and Lys80. His83 serves as a coordination point for heme b. The chain crosses the membrane as a helical span at residues 84 to 104 (AAMHLLAFLLTVLGLHAVFEF). The Lumenal portion of the chain corresponds to 105–119 (HNHAKIPHLYSLHSW). Heme b-binding positions include 112 to 115 (HLYS) and His117. The chain crosses the membrane as a helical span at residues 120-140 (LGITTVFLFACQWFLGFSVFL). At 141-154 (LPWASMWLRSLLKP) the chain is on the cytoplasmic side. L-ascorbate is bound at residue Arg149. The chain crosses the membrane as a helical span at residues 155 to 175 (IHVFFGASILSLAIASVVSGI). Positions 156 and 177 each coordinate heme b. Over 176–197 (NEKLFFSLKNGTKTYSNLPSEA) the chain is Lumenal. N-linked (GlcNAc...) asparagine glycosylation is present at Asn185. The chain crosses the membrane as a helical span at residues 198–218 (VFANCAGMLVVVFGLLVLYIL). Topologically, residues 219-265 (LASSWKRPEPGMQAEREPTRTRGRAGTPEVMLEGERGLAEPLLQKRS) are cytoplasmic. Lys224 is a heme b binding site. Positions 228–238 (PGMQAEREPTR) are enriched in basic and acidic residues. Positions 228–265 (PGMQAEREPTRTRGRAGTPEVMLEGERGLAEPLLQKRS) are disordered.

Homodimer. The cofactor is heme b. N-glycosylated.

The protein localises to the late endosome membrane. The protein resides in the lysosome membrane. The enzyme catalyses Fe(3+)(out) + L-ascorbate(in) = monodehydro-L-ascorbate radical(in) + Fe(2+)(out) + H(+). Functionally, transmembrane reductase that uses ascorbate as an electron donor in the cytoplasm and transfers electrons across membranes to reduce iron cations Fe(3+) into Fe(2+) in the lumen of the late endosome and lysosome. Reduced iron can then be extruded from the late endosome and lysosome to the cytoplasm by divalent metal-specific transporters. It is therefore most probably involved in endosomal and lysosomal cellular iron homeostasis. The sequence is that of Lysosomal membrane ascorbate-dependent ferrireductase CYB561A3 from Bos taurus (Bovine).